The primary structure comprises 979 residues: UPF0182 protein BCG_0095 (979 aa).

Helical transmembrane passes span 19-39 (LVTAGMGMLALLLFGPRLVDI), 63-83 (LAIVAAVALVVAGIVLAALLL), 114-134 (LFGWGIAVTLGVVCGLIASFD), 174-194 (WLFVAVVLAFLASLLTHYLFG), 211-231 (VQLAVFAGAVVLLKAVAYWLD), 260-280 (KLVLVAIAVLCAVSFFTAIFL), and 288-308 (MAAALLVLSAILVGGLWPLLM). The segment at 898-948 (GTGRVATAPGGDAASAPPPGAGGPAPPQAVPPPRTTQPPAAPPRGPDVPPA) is disordered. Over residues 902–912 (VATAPGGDAAS) the composition is skewed to low complexity. A compositionally biased stretch (pro residues) spans 913–946 (APPPGAGGPAPPQAVPPPRTTQPPAAPPRGPDVP).

Belongs to the UPF0182 family.

It is found in the cell membrane. This chain is UPF0182 protein BCG_0095, found in Mycobacterium bovis (strain BCG / Pasteur 1173P2).